A 311-amino-acid polypeptide reads, in one-letter code: Mediator of RNA polymerase II transcription subunit 27 (311 aa).

S132 carries the post-translational modification Phosphoserine. K134 carries the N6-methyllysine modification.

The protein belongs to the Mediator complex subunit 27 family. As to quaternary structure, component of the Mediator complex, which is composed of MED1, MED4, MED6, MED7, MED8, MED9, MED10, MED11, MED12, MED13, MED13L, MED14, MED15, MED16, MED17, MED18, MED19, MED20, MED21, MED22, MED23, MED24, MED25, MED26, MED27, MED29, MED30, MED31, CCNC, CDK8 and CDC2L6/CDK11. The MED12, MED13, CCNC and CDK8 subunits form a distinct module termed the CDK8 module. Mediator containing the CDK8 module is less active than Mediator lacking this module in supporting transcriptional activation. Individual preparations of the Mediator complex lacking one or more distinct subunits have been variously termed ARC, CRSP, DRIP, PC2, SMCC and TRAP.

It is found in the nucleus. Functionally, component of the Mediator complex, a coactivator involved in the regulated transcription of nearly all RNA polymerase II-dependent genes. Mediator functions as a bridge to convey information from gene-specific regulatory proteins to the basal RNA polymerase II transcription machinery. Mediator is recruited to promoters by direct interactions with regulatory proteins and serves as a scaffold for the assembly of a functional preinitiation complex with RNA polymerase II and the general transcription factors. This Bos taurus (Bovine) protein is Mediator of RNA polymerase II transcription subunit 27 (MED27).